A 217-amino-acid chain; its full sequence is Large ribosomal subunit protein uL3 (217 aa).

Positions 129–161 (SRGPMSHGSKNHRAPGSTGAGTTPGRIYPGKRM) are disordered. A compositionally biased stretch (low complexity) spans 142–153 (APGSTGAGTTPG).

This sequence belongs to the universal ribosomal protein uL3 family. In terms of assembly, part of the 50S ribosomal subunit. Forms a cluster with proteins L14 and L19.

In terms of biological role, one of the primary rRNA binding proteins, it binds directly near the 3'-end of the 23S rRNA, where it nucleates assembly of the 50S subunit. This Prochlorococcus marinus subsp. pastoris (strain CCMP1986 / NIES-2087 / MED4) protein is Large ribosomal subunit protein uL3.